The following is a 226-amino-acid chain: Large ribosomal subunit protein uL3 (226 aa).

Positions Asn-136 to Pro-162 are disordered. A compositionally biased stretch (polar residues) spans Phe-137–Met-158. Gln-160 bears the N5-methylglutamine mark.

This sequence belongs to the universal ribosomal protein uL3 family. Part of the 50S ribosomal subunit. Forms a cluster with proteins L14 and L19. Post-translationally, methylated by PrmB.

Its function is as follows. One of the primary rRNA binding proteins, it binds directly near the 3'-end of the 23S rRNA, where it nucleates assembly of the 50S subunit. The chain is Large ribosomal subunit protein uL3 from Methylibium petroleiphilum (strain ATCC BAA-1232 / LMG 22953 / PM1).